The sequence spans 148 residues: Putative nickel-responsive regulator (148 aa).

Positions 88, 99, 101, and 107 each coordinate Ni(2+).

It belongs to the transcriptional regulatory CopG/NikR family. It depends on Ni(2+) as a cofactor.

Functionally, transcriptional regulator. The chain is Putative nickel-responsive regulator from Helicobacter pylori (strain G27).